Here is a 325-residue protein sequence, read N- to C-terminus: Formimidoylglutamase (325 aa).

Positions 125, 155, 157, 159, 246, and 248 each coordinate Mn(2+).

The protein belongs to the arginase family. It depends on Mn(2+) as a cofactor.

It catalyses the reaction N-formimidoyl-L-glutamate + H2O = formamide + L-glutamate. It participates in amino-acid degradation; L-histidine degradation into L-glutamate; L-glutamate from N-formimidoyl-L-glutamate (hydrolase route): step 1/1. Functionally, catalyzes the conversion of N-formimidoyl-L-glutamate to L-glutamate and formamide. The sequence is that of Formimidoylglutamase from Ralstonia nicotianae (strain ATCC BAA-1114 / GMI1000) (Ralstonia solanacearum).